The chain runs to 111 residues: Prostate and testis expressed protein 2 (111 aa).

Positions 1 to 18 (MFVLVMICLFCQYWGVLN) are cleaved as a signal peptide. The 82-residue stretch at 27-108 (LLCYKCKKYH…CKHSNYCNLP (82 aa)) folds into the UPAR/Ly6 domain. 4 disulfides stabilise this stretch: C29-C55, C32-C40, C47-C78, and C82-C99.

Belongs to the PATE family. In terms of tissue distribution, expressed in prostate, testis, brain and lung.

It is found in the secreted. This chain is Prostate and testis expressed protein 2 (Pate2), found in Mus musculus (Mouse).